Consider the following 541-residue polypeptide: Glucose-6-phosphate isomerase (541 aa).

Residue E346 is the Proton donor of the active site. Residues H377 and K506 contribute to the active site.

It belongs to the GPI family.

Its subcellular location is the cytoplasm. It carries out the reaction alpha-D-glucose 6-phosphate = beta-D-fructose 6-phosphate. Its pathway is carbohydrate biosynthesis; gluconeogenesis. It participates in carbohydrate degradation; glycolysis; D-glyceraldehyde 3-phosphate and glycerone phosphate from D-glucose: step 2/4. Catalyzes the reversible isomerization of glucose-6-phosphate to fructose-6-phosphate. The chain is Glucose-6-phosphate isomerase from Rhizobium meliloti (strain 1021) (Ensifer meliloti).